The primary structure comprises 314 residues: Homoserine kinase (314 aa).

95 to 105 (PHSRGLGSSAA) serves as a coordination point for ATP.

This sequence belongs to the GHMP kinase family. Homoserine kinase subfamily.

Its subcellular location is the cytoplasm. It catalyses the reaction L-homoserine + ATP = O-phospho-L-homoserine + ADP + H(+). The protein operates within amino-acid biosynthesis; L-threonine biosynthesis; L-threonine from L-aspartate: step 4/5. In terms of biological role, catalyzes the ATP-dependent phosphorylation of L-homoserine to L-homoserine phosphate. The protein is Homoserine kinase of Mycobacterium sp. (strain JLS).